The chain runs to 288 residues: Homoserine kinase (288 aa).

Residue 79–89 (PPARGLGSSSA) participates in ATP binding.

The protein belongs to the GHMP kinase family. Homoserine kinase subfamily.

The protein resides in the cytoplasm. The catalysed reaction is L-homoserine + ATP = O-phospho-L-homoserine + ADP + H(+). It participates in amino-acid biosynthesis; L-threonine biosynthesis; L-threonine from L-aspartate: step 4/5. Its function is as follows. Catalyzes the ATP-dependent phosphorylation of L-homoserine to L-homoserine phosphate. The chain is Homoserine kinase from Listeria monocytogenes serovar 1/2a (strain ATCC BAA-679 / EGD-e).